A 2458-amino-acid chain; its full sequence is Acetyl-CoA carboxylase 2 (2458 aa).

The residue at position 35 (serine 35) is a Phosphoserine. Residues 35-155 form a disordered region; the sequence is SKSEANLIPS…SPSKEDKKQA (121 aa). The span at 51-60 shows a compositional bias: polar residues; that stretch reads SDNSGETPQR. Position 70 is a phosphothreonine (threonine 70). Basic and acidic residues predominate over residues 77-87; the sequence is ASHKGPKDAGR. 2 positions are modified to phosphoserine: serine 91 and serine 95. Residues 103-146 are compositionally biased toward polar residues; that stretch reads PLSSSDAAPSPELQANGTGTQGLEATDTNGLSSSARPQGQQAGS. Phosphoserine is present on residues serine 169, serine 175, serine 192, serine 195, and serine 200. Residues 174–193 form a disordered region; it reads SSDEDSVAGSSRESTRKGSR. Residue threonine 207 is modified to Phosphothreonine. The residue at position 220 (serine 220) is a Phosphoserine. Serine 222 carries the post-translational modification Phosphoserine; by AMPK. Residues 259 to 761 enclose the Biotin carboxylation domain; sequence VIEKVLIANN…DTGWLDYLIA (503 aa). An ATP-grasp domain is found at 414–609; sequence DDLQQGKRIS…LPAAQLQIAM (196 aa). Residue 458–463 participates in ATP binding; the sequence is GGGGKG. Serine 469 is subject to Phosphoserine. Mg(2+) contacts are provided by glutamate 567, glutamate 580, and asparagine 582. The Mn(2+) site is built by glutamate 567, glutamate 580, and asparagine 582. Residue arginine 584 is part of the active site. Threonine 753 carries the phosphothreonine modification. In terms of domain architecture, Biotinyl-binding spans 888–962; the sequence is FEKENDPTVL…EAGCVVARLE (75 aa). Lysine 929 is subject to N6-biotinyllysine. A Phosphoserine modification is found at serine 1340. Threonine 1342 bears the Phosphothreonine mark. Serine 1360 and serine 1405 each carry phosphoserine. The region spanning 1695–2025 is the CoA carboxyltransferase N-terminal domain; it reads PYVTKDLLQA…DNHSPVPIIT (331 aa). The interval 1695–2345 is carboxyltransferase; it reads PYVTKDLLQA…EDQVKQEILQ (651 aa). CoA is bound by residues arginine 1934, lysine 2238, and arginine 2240. A CoA carboxyltransferase C-terminal domain is found at 2029–2345; that stretch reads PIDREIEFLP…EDQVKQEILQ (317 aa).

As to quaternary structure, monomer, homodimer, and homotetramer. Forms filamentous polymers. Interacts with MID1IP1; interaction with MID1IP1 promotes oligomerization and increases its activity in a citrate-dependent manner. The cofactor is biotin. Mg(2+) serves as cofactor. Requires Mn(2+) as cofactor. Post-translationally, the biotin cofactor is covalently attached to the central biotinyl-binding domain and is required for the catalytic activity. Phosphorylation at Ser-222 by AMPK inactivates the enzyme. Required for the maintenance of skeletal muscle lipid and glucose homeostasis. Widely expressed with highest levels in heart, skeletal muscle, liver, adipose tissue, mammary gland, adrenal gland and colon. Isoform 3 is expressed in skeletal muscle, adipose tissue and liver (at protein level). Isoform 3 is detected at high levels in adipose tissue with lower levels in heart, liver, skeletal muscle and testis.

It is found in the mitochondrion. It catalyses the reaction hydrogencarbonate + acetyl-CoA + ATP = malonyl-CoA + ADP + phosphate + H(+). It participates in lipid metabolism; malonyl-CoA biosynthesis; malonyl-CoA from acetyl-CoA: step 1/1. Its activity is regulated as follows. Activity is increased by oligomerization of the protein into filaments. The oligomerization and the activity of the enzyme are inhibited by phosphorylation at Ser-222. Inhibited by its product, malonyl-CoA. Activated by citrate. Activation by MID1IP1 is citrate-dependent. Soraphen A, inhibits the enzyme by preventing the formation of active filamentous oligomers. Its function is as follows. Mitochondrial enzyme that catalyzes the carboxylation of acetyl-CoA to malonyl-CoA and plays a central role in fatty acid metabolism. Catalyzes a 2 steps reaction starting with the ATP-dependent carboxylation of the biotin carried by the biotin carboxyl carrier (BCC) domain followed by the transfer of the carboxyl group from carboxylated biotin to acetyl-CoA. Through the production of malonyl-CoA that allosterically inhibits carnitine palmitoyltransferase 1 at the mitochondria, negatively regulates fatty acid oxidation. Together with its cytosolic isozyme ACACA, which is involved in de novo fatty acid biosynthesis, promotes lipid storage. The sequence is that of Acetyl-CoA carboxylase 2 from Homo sapiens (Human).